The primary structure comprises 98 residues: Prolactin-releasing peptide (98 aa).

A signal peptide spans 1-22 (MKAVGAWLLCLLLLGLALQGAA). Phenylalanine 53 is modified (phenylalanine amide). Residues 58–98 (AAPGDGPRPGPRRELACIPLEGGAEPSRALLGRLTAQLVQE) constitute a propeptide that is removed on maturation.

As to expression, more abundantly expressed in the brainstem than the hypothalamus.

It localises to the secreted. Its function is as follows. Stimulates prolactin (PRL) release and regulates the expression of prolactin through its receptor GPR10. May stimulate lactotrophs directly to secrete PRL. The protein is Prolactin-releasing peptide (PRLH) of Ovis aries (Sheep).